A 550-amino-acid polypeptide reads, in one-letter code: Thermosome subunit (550 aa).

The disordered stretch occupies residues 529 to 550 (KEKEGEKGGGGSEDFSSSSDLD). Over residues 541–550 (EDFSSSSDLD) the composition is skewed to low complexity.

It belongs to the TCP-1 chaperonin family. As to quaternary structure, forms an oligomeric complex of eight-membered rings.

In terms of biological role, molecular chaperone; binds unfolded polypeptides in vitro, and has a weak ATPase activity. In Pyrococcus abyssi (strain GE5 / Orsay), this protein is Thermosome subunit (ths).